The sequence spans 254 residues: Triosephosphate isomerase (254 aa).

Residue N9 to K11 participates in substrate binding. H96 functions as the Electrophile in the catalytic mechanism. The active-site Proton acceptor is the E168. Residues G174 and S213 each contribute to the substrate site.

This sequence belongs to the triosephosphate isomerase family. In terms of assembly, homodimer.

The protein localises to the cytoplasm. It carries out the reaction D-glyceraldehyde 3-phosphate = dihydroxyacetone phosphate. It participates in carbohydrate biosynthesis; gluconeogenesis. The protein operates within carbohydrate degradation; glycolysis; D-glyceraldehyde 3-phosphate from glycerone phosphate: step 1/1. Functionally, involved in the gluconeogenesis. Catalyzes stereospecifically the conversion of dihydroxyacetone phosphate (DHAP) to D-glyceraldehyde-3-phosphate (G3P). This Buchnera aphidicola subsp. Schizaphis graminum (strain Sg) protein is Triosephosphate isomerase.